The following is a 470-amino-acid chain: ATP synthase subunit beta (470 aa).

155–162 (GGAGVGKT) is an ATP binding site.

The protein belongs to the ATPase alpha/beta chains family. F-type ATPases have 2 components, CF(1) - the catalytic core - and CF(0) - the membrane proton channel. CF(1) has five subunits: alpha(3), beta(3), gamma(1), delta(1), epsilon(1). CF(0) has three main subunits: a(1), b(2) and c(9-12). The alpha and beta chains form an alternating ring which encloses part of the gamma chain. CF(1) is attached to CF(0) by a central stalk formed by the gamma and epsilon chains, while a peripheral stalk is formed by the delta and b chains.

It localises to the cell membrane. The enzyme catalyses ATP + H2O + 4 H(+)(in) = ADP + phosphate + 5 H(+)(out). In terms of biological role, produces ATP from ADP in the presence of a proton gradient across the membrane. The catalytic sites are hosted primarily by the beta subunits. This chain is ATP synthase subunit beta, found in Pectinatus frisingensis.